The primary structure comprises 185 residues: Threonylcarbamoyl-AMP synthase (185 aa).

The region spanning 4 to 185 (SFRAQCAARV…LVTGQVIRPA (182 aa)) is the YrdC-like domain.

This sequence belongs to the SUA5 family. TsaC subfamily.

Its subcellular location is the cytoplasm. It carries out the reaction L-threonine + hydrogencarbonate + ATP = L-threonylcarbamoyladenylate + diphosphate + H2O. In terms of biological role, required for the formation of a threonylcarbamoyl group on adenosine at position 37 (t(6)A37) in tRNAs that read codons beginning with adenine. Catalyzes the conversion of L-threonine, HCO(3)(-)/CO(2) and ATP to give threonylcarbamoyl-AMP (TC-AMP) as the acyladenylate intermediate, with the release of diphosphate. The protein is Threonylcarbamoyl-AMP synthase of Pseudomonas paraeruginosa (strain DSM 24068 / PA7) (Pseudomonas aeruginosa (strain PA7)).